Here is a 507-residue protein sequence, read N- to C-terminus: UDP-N-acetylhexosamine pyrophosphorylase-like protein 1 (507 aa).

The tract at residues Ala-56 to Arg-91 is disordered. The segment covering Arg-78–Arg-91 has biased composition (basic and acidic residues). Positions Leu-111–Gly-114 match the Substrate binding motif. UTP-binding positions include Leu-111 to Gly-114, Lys-125, Gln-199, and Gly-225. Residue Asn-226 coordinates substrate. Asp-256 lines the UTP pocket. Residues Glu-306–Tyr-307 carry the Substrate binding motif. A UTP-binding site is contributed by Lys-380. Lys-410 lines the substrate pocket.

Belongs to the UDPGP type 1 family.

The protein is UDP-N-acetylhexosamine pyrophosphorylase-like protein 1 (UAP1L1) of Homo sapiens (Human).